A 514-amino-acid polypeptide reads, in one-letter code: Multifunctional alkaline phosphatase superfamily protein PehA (514 aa).

Mn(2+) is bound by residues Asp-12, Cys-57, Asp-324, and His-325. Cys-57 serves as the catalytic Nucleophile. Cys-57 is modified (3-oxoalanine (Cys)).

It belongs to the alkaline phosphatase superfamily. In terms of assembly, homotetramer. The cofactor is Mn(2+). Post-translationally, the conversion to 3-oxoalanine (also known as C-formylglycine, FGly), of a serine or cysteine residue in prokaryotes and of a cysteine residue in eukaryotes, is critical for catalytic activity. Phosphate triester hydrolytic activity is retained with unmodified cysteine acting as a nucleophile.

Anions including Cl(-) and CH3COO(-), and SO4(2-) salts stimulate activity 20-40% at 100 mM. In terms of biological role, hydrolytic enzyme with a broad substrate specificity acting on phosphate diesters and phosphonate monoesters. Hydrolyzes phosphate mono- and triesters, sulfate monoesters and sulfonate monoesters. Hydrolyzes glyphosate monoesters. Does not hydrolyze DNA or cGMP. Hydrolyzes glyceryl glyphosate, but this substrate has a much lower affinity than the glyphosate monoesters. This chain is Multifunctional alkaline phosphatase superfamily protein PehA, found in Trinickia caryophylli (Paraburkholderia caryophylli).